Here is a 566-residue protein sequence, read N- to C-terminus: Good for full DBP5 activity protein 2 (566 aa).

Residues 1–16 (MQVQKMVRDNSNNGSD) show a composition bias toward polar residues. Residues 1 to 41 (MQVQKMVRDNSNNGSDKSVHWERRNNNGAGPRYRSRSGNTG) form a disordered region.

Functionally, high-copy suppressor of DBP5 mutation. This chain is Good for full DBP5 activity protein 2 (GFD2), found in Saccharomyces cerevisiae (strain ATCC 204508 / S288c) (Baker's yeast).